A 118-amino-acid chain; its full sequence is Peptidyl-prolyl cis-trans isomerase Pin1 (118 aa).

2 disordered regions span residues 1 to 37 and 61 to 84; these read MSSE…ATTR and LASR…GRGQ. In terms of domain architecture, PpiC spans 3 to 118; it reads SEKVRASHIL…SGVHIIKRTG (116 aa). The span at 12–22 shows a compositional bias: basic residues; sequence LIKHQGSRRKS.

Belongs to the PpiC/parvulin rotamase family. The N-terminus is blocked. In terms of tissue distribution, expressed in roots, stems, leaves, flowers and seedlings.

It localises to the cytoplasm. The protein resides in the nucleus. The catalysed reaction is [protein]-peptidylproline (omega=180) = [protein]-peptidylproline (omega=0). Inhibited in vitro by juglone. Prolyl cis/trans isomerase with specificity for phospho-Ser-Pro bonds. This Digitalis lanata (Grecian foxglove) protein is Peptidyl-prolyl cis-trans isomerase Pin1 (PARV12.8).